The following is a 140-amino-acid chain: Midkine (140 aa).

An N-terminal signal peptide occupies residues 1 to 22 (MQHRGFFLLALLALLVVTSAVA). Disulfide bonds link C34–C58, C42–C67, C49–C71, C81–C113, and C91–C123.

The protein belongs to the pleiotrophin family. Homodimer. Interacts with ALK. Interacts with LRP1; promotes neuronal survival. Interacts with LRP2. Interacts with NCAM1. Interacts (via C-terminal) with PTPRZ1 (via chondroitin sulfate chains); this interaction is inhibited by PTN; this interaction promotes neuronal migration. Interacts with NCL; this interaction promotes NCL clustering and lateral movements of this complex into lipid rafts leading to MDK internalization. Interacts with LRP6 and LRP8: this interaction is calcium dependent. Interacts with ITGA4. Interacts with ITGA6. Interacts with ITGB1. Interacts with ITGA4:ITGB1 complex; this interaction mediates MDK-induced osteoblast cells migration through PXN phosphorylation. Interacts with ITGA6:ITGB1 complex; this interaction mediates MDK-induced neurite outgrowth. Interacts with NOTCH2; this interactio mediates a nuclear accumulation of NOTCH2 and therefore activation of NOTCH2 signaling leading to interaction between HES1 and STAT3. Interacts with GPC2 (via heparan sulfate chain); this interaction is inhibited by heparin followed by chondroitin sulfate E; this interaction induces GPC2 clustering through heparan sulfate chain; this interaction induces neuronal cell adhesion and neurite outgrowth. Interacts with SDC3; this interaction induces SDC3 clustering; this interaction induces neuronal cell adhesion and neurite outgrowth. Interacts with SDC1. Interacts with CSPG5; this interaction promotes elongation of oligodendroglial precursor-like cells. As to expression, expressed in the follicular epithelium and granulosa cells of the ovary.

The protein localises to the secreted. Secreted protein that functions as a cytokine and growth factor and mediates its signal through cell-surface proteoglycan and non-proteoglycan receptors. Binds cell-surface proteoglycan receptors via their chondroitin sulfate (CS) groups. Thereby regulates many processes like inflammatory response, cell proliferation, cell adhesion, cell growth, cell survival, tissue regeneration, cell differentiation and cell migration. Participates in inflammatory processes by exerting two different activities. Firstly, mediates neutrophils and macrophages recruitment to the sites of inflammation both by direct action by cooperating namely with ITGB2 via LRP1 and by inducing chemokine expression. This inflammation can be accompanied by epithelial cell survival and smooth muscle cell migration after renal and vessel damage, respectively. Secondly, suppresses the development of tolerogenic dendric cells thereby inhibiting the differentiation of regulatory T cells and also promote T cell expansion through NFAT signaling and Th1 cell differentiation. Promotes tissue regeneration after injury or trauma. After heart damage negatively regulates the recruitment of inflammatory cells and mediates cell survival through activation of anti-apoptotic signaling pathways via MAPKs and AKT pathways through the activation of angiogenesis. Also facilitates liver regeneration as well as bone repair by recruiting macrophage at trauma site and by promoting cartilage development by facilitating chondrocyte differentiation. Plays a role in brain by promoting neural precursor cells survival and growth through interaction with heparan sulfate proteoglycans. Binds PTPRZ1 and promotes neuronal migration and embryonic neurons survival. Binds SDC3 or GPC2 and mediates neurite outgrowth and cell adhesion. Binds chondroitin sulfate E and heparin leading to inhibition of neuronal cell adhesion induced by binding with GPC2. Binds CSPG5 and promotes elongation of oligodendroglial precursor-like cells. Also binds ITGA6:ITGB1 complex; this interaction mediates MDK-induced neurite outgrowth. Binds LRP1; promotes neuronal survival. Binds ITGA4:ITGB1 complex; this interaction mediates MDK-induced osteoblast cells migration through PXN phosphorylation. Binds anaplastic lymphoma kinase (ALK) which induces ALK activation and subsequent phosphorylation of the insulin receptor substrate (IRS1), followed by the activation of mitogen-activated protein kinase (MAPK) and PI3-kinase, and the induction of cell proliferation. Promotes epithelial to mesenchymal transition through interaction with NOTCH2. During arteriogenesis, plays a role in vascular endothelial cell proliferation by inducing VEGFA expression and release which in turn induces nitric oxide synthase expression. Moreover activates vasodilation through nitric oxide synthase activation. Negatively regulates bone formation in response to mechanical load by inhibiting Wnt/beta-catenin signaling in osteoblasts. In addition plays a role in hippocampal development, working memory, auditory response, early fetal adrenal gland development and the female reproductive system. The chain is Midkine from Mus musculus (Mouse).